Here is a 425-residue protein sequence, read N- to C-terminus: Glutamyl-tRNA reductase (425 aa).

Substrate-binding positions include 49-52, Ser-107, 112-114, and Gln-118; these read TCNR and EPQ. The active-site Nucleophile is the Cys-50. Residue 187–192 participates in NADP(+) binding; it reads GAGETI.

Belongs to the glutamyl-tRNA reductase family. As to quaternary structure, homodimer.

It carries out the reaction (S)-4-amino-5-oxopentanoate + tRNA(Glu) + NADP(+) = L-glutamyl-tRNA(Glu) + NADPH + H(+). It functions in the pathway porphyrin-containing compound metabolism; protoporphyrin-IX biosynthesis; 5-aminolevulinate from L-glutamyl-tRNA(Glu): step 1/2. Its function is as follows. Catalyzes the NADPH-dependent reduction of glutamyl-tRNA(Glu) to glutamate 1-semialdehyde (GSA). In Pseudomonas putida (strain GB-1), this protein is Glutamyl-tRNA reductase.